The primary structure comprises 208 residues: FMN-dependent NADH:quinone oxidoreductase 1 (208 aa).

An FMN-binding site is contributed by S17 to S19.

The protein belongs to the azoreductase type 1 family. Homodimer. Requires FMN as cofactor.

The catalysed reaction is 2 a quinone + NADH + H(+) = 2 a 1,4-benzosemiquinone + NAD(+). It catalyses the reaction N,N-dimethyl-1,4-phenylenediamine + anthranilate + 2 NAD(+) = 2-(4-dimethylaminophenyl)diazenylbenzoate + 2 NADH + 2 H(+). Functionally, quinone reductase that provides resistance to thiol-specific stress caused by electrophilic quinones. Its function is as follows. Also exhibits azoreductase activity. Catalyzes the reductive cleavage of the azo bond in aromatic azo compounds to the corresponding amines. This Listeria innocua serovar 6a (strain ATCC BAA-680 / CLIP 11262) protein is FMN-dependent NADH:quinone oxidoreductase 1.